Consider the following 322-residue polypeptide: Adenine deaminase (322 aa).

His11, His13, and His189 together coordinate Zn(2+). Catalysis depends on Glu192, which acts as the Proton donor. Residue Asp270 coordinates Zn(2+). Asp271 serves as a coordination point for substrate.

Belongs to the metallo-dependent hydrolases superfamily. Adenosine and AMP deaminases family. Adenine deaminase type 2 subfamily. Requires Zn(2+) as cofactor.

It carries out the reaction adenine + H2O + H(+) = hypoxanthine + NH4(+). In terms of biological role, catalyzes the hydrolytic deamination of adenine to hypoxanthine. Plays an important role in the purine salvage pathway and in nitrogen catabolism. The chain is Adenine deaminase from Rhizobium etli (strain ATCC 51251 / DSM 11541 / JCM 21823 / NBRC 15573 / CFN 42).